Consider the following 362-residue polypeptide: Chorismate synthase (362 aa).

Arg47 is an NADP(+) binding site. FMN-binding positions include 124-126 (RSS), Gly286, 301-305 (KPTAT), and Arg327.

The protein belongs to the chorismate synthase family. Homotetramer. The cofactor is FMNH2.

The catalysed reaction is 5-O-(1-carboxyvinyl)-3-phosphoshikimate = chorismate + phosphate. It participates in metabolic intermediate biosynthesis; chorismate biosynthesis; chorismate from D-erythrose 4-phosphate and phosphoenolpyruvate: step 7/7. Functionally, catalyzes the anti-1,4-elimination of the C-3 phosphate and the C-6 proR hydrogen from 5-enolpyruvylshikimate-3-phosphate (EPSP) to yield chorismate, which is the branch point compound that serves as the starting substrate for the three terminal pathways of aromatic amino acid biosynthesis. This reaction introduces a second double bond into the aromatic ring system. The polypeptide is Chorismate synthase (Synechocystis sp. (strain ATCC 27184 / PCC 6803 / Kazusa)).